A 335-amino-acid chain; its full sequence is uncharacterized protein (335 aa).

The first 21 residues, 1–21, serve as a signal peptide directing secretion; sequence MDKKARAHTVIVCLVGALSLA. A lipid anchor (N-palmitoyl cysteine) is attached at Cys-22. A lipid anchor (S-diacylglycerol cysteine) is attached at Cys-22.

The protein localises to the cell membrane. This is an uncharacterized protein from Treponema pallidum (strain Nichols).